The following is a 366-amino-acid chain: Holliday junction branch migration complex subunit RuvB (366 aa).

Residues 1 to 48 are disordered; that stretch reads MIDRLMAREAIYQQSNPDPGGDPPEDGPPHGKNAADGGDEPDRGPDPD. The segment at 21-212 is large ATPase domain (RuvB-L); it reads GDPPEDGPPH…FQIREHLGWY (192 aa). ATP contacts are provided by residues Leu51, Arg52, Gly93, Lys96, Thr97, Thr98, 159 to 161, Arg202, Tyr212, and Arg249; that span reads EDF. Thr97 serves as a coordination point for Mg(2+). Residues 213–283 are small ATPAse domain (RuvB-S); that stretch reads TRKELAEIVL…VCEAALDMIG (71 aa). The head domain (RuvB-H) stretch occupies residues 286 to 366; it reads HLGLDKQDRN…KRQMPDRPLS (81 aa). Residues Arg341, Arg343, and Arg346 each contribute to the DNA site.

This sequence belongs to the RuvB family. As to quaternary structure, homohexamer. Forms an RuvA(8)-RuvB(12)-Holliday junction (HJ) complex. HJ DNA is sandwiched between 2 RuvA tetramers; dsDNA enters through RuvA and exits via RuvB. An RuvB hexamer assembles on each DNA strand where it exits the tetramer. Each RuvB hexamer is contacted by two RuvA subunits (via domain III) on 2 adjacent RuvB subunits; this complex drives branch migration. In the full resolvosome a probable DNA-RuvA(4)-RuvB(12)-RuvC(2) complex forms which resolves the HJ.

The protein resides in the cytoplasm. The enzyme catalyses ATP + H2O = ADP + phosphate + H(+). The RuvA-RuvB-RuvC complex processes Holliday junction (HJ) DNA during genetic recombination and DNA repair, while the RuvA-RuvB complex plays an important role in the rescue of blocked DNA replication forks via replication fork reversal (RFR). RuvA specifically binds to HJ cruciform DNA, conferring on it an open structure. The RuvB hexamer acts as an ATP-dependent pump, pulling dsDNA into and through the RuvAB complex. RuvB forms 2 homohexamers on either side of HJ DNA bound by 1 or 2 RuvA tetramers; 4 subunits per hexamer contact DNA at a time. Coordinated motions by a converter formed by DNA-disengaged RuvB subunits stimulates ATP hydrolysis and nucleotide exchange. Immobilization of the converter enables RuvB to convert the ATP-contained energy into a lever motion, pulling 2 nucleotides of DNA out of the RuvA tetramer per ATP hydrolyzed, thus driving DNA branch migration. The RuvB motors rotate together with the DNA substrate, which together with the progressing nucleotide cycle form the mechanistic basis for DNA recombination by continuous HJ branch migration. Branch migration allows RuvC to scan DNA until it finds its consensus sequence, where it cleaves and resolves cruciform DNA. This Rhodopirellula baltica (strain DSM 10527 / NCIMB 13988 / SH1) protein is Holliday junction branch migration complex subunit RuvB.